The primary structure comprises 61 residues: Antimicrobial peptide 1 (61 aa).

Residues 1–24 (LPVAFLKFAIVLILFIAMSAMIEA) form the signal peptide. A Pyrrolidone carboxylic acid modification is found at Q25. Cystine bridges form between C26/C43, C33/C47, and C42/C58.

This sequence belongs to the AMP family. In terms of assembly, homodimer. Three disulfide bonds are present. As to expression, found only in seeds.

It is found in the secreted. Possesses antifungal activity and is also active on two tested Gram-positive bacteria but is non-toxic for Gram-negative bacteria and cultured human cells. This chain is Antimicrobial peptide 1 (AMP1), found in Mirabilis jalapa (Garden four-o'clock).